A 305-amino-acid chain; its full sequence is Dermonecrotic toxin LiSicTox-betaID1 (305 aa).

A signal peptide spans 1–18; the sequence is MQLFIILCLAGSAVQLEG. Residues 19-26 constitute a propeptide that is removed on maturation; it reads TELDGVER. Histidine 38 is an active-site residue. Mg(2+) contacts are provided by glutamate 58 and aspartate 60. Residue histidine 74 is the Nucleophile of the active site. 2 disulfide bridges follow: cysteine 78-cysteine 84 and cysteine 80-cysteine 223. Aspartate 118 contributes to the Mg(2+) binding site.

This sequence belongs to the arthropod phospholipase D family. Class II subfamily. Class IIb sub-subfamily. Mg(2+) serves as cofactor. As to expression, expressed by the venom gland.

Its subcellular location is the secreted. It carries out the reaction an N-(acyl)-sphingosylphosphocholine = an N-(acyl)-sphingosyl-1,3-cyclic phosphate + choline. The catalysed reaction is an N-(acyl)-sphingosylphosphoethanolamine = an N-(acyl)-sphingosyl-1,3-cyclic phosphate + ethanolamine. The enzyme catalyses a 1-acyl-sn-glycero-3-phosphocholine = a 1-acyl-sn-glycero-2,3-cyclic phosphate + choline. It catalyses the reaction a 1-acyl-sn-glycero-3-phosphoethanolamine = a 1-acyl-sn-glycero-2,3-cyclic phosphate + ethanolamine. Functionally, dermonecrotic toxins cleave the phosphodiester linkage between the phosphate and headgroup of certain phospholipids (sphingolipid and lysolipid substrates), forming an alcohol (often choline) and a cyclic phosphate. This toxin acts on sphingomyelin (SM) with low activity. It may also act on ceramide phosphoethanolamine (CPE), lysophosphatidylcholine (LPC) and lysophosphatidylethanolamine (LPE), but not on lysophosphatidylserine (LPS), and lysophosphatidylglycerol (LPG). It acts by transphosphatidylation, releasing exclusively cyclic phosphate products as second products. Has no or weak activities in inducing dermonecrosis, hemolysis, inflammatory response, platelet aggregation and increase in vessel permeability. In vivo, shows no lethality when injected at higher dose into mice. This Loxosceles intermedia (Brown spider) protein is Dermonecrotic toxin LiSicTox-betaID1.